We begin with the raw amino-acid sequence, 414 residues long: MLSAQQFLKEFNNVESLNESLYEIVSHICEEVKLQGDKALKNYNLQFDQVETEKLELEQSQLKNAYDMLDNETRDALEQSYQRIKVYQENIKVKQESSQQTECYERYHPIERVGIYVPGGKASYPSTVLMTATLAQVAGVNEITVVTPPQNNGICQEVLAACYITGVHHVYQVGGAQSIAALTYGTETIKKVDKIVGPGNQYVAYAKKFVFGQVGIDQIAGPTEIALIIDESADLDAIAYDVFAQAEHDEMACTYVISENEKVLNQLNTIIQEKLQYVERQDIISQSIANHHYLILAQDTEEACLIMNTIAPEHASIQTRAPEMYIDKVKYVGALFLGHFSPEVIGDYMAGPSHVLPTNQTARFTNGLSVNDFMTRHSVIHLSQKTFNEVAESAEHIAHIESLFNHEKSIHVRR.

Tyr-116, Gln-177, and Asn-200 together coordinate NAD(+). Residues Thr-223, Gln-245, and His-248 each coordinate substrate. Zn(2+) contacts are provided by Gln-245 and His-248. Residues Glu-313 and His-314 each act as proton acceptor in the active site. Substrate-binding residues include His-314, Asp-347, Glu-401, and His-406. A Zn(2+)-binding site is contributed by Asp-347. His-406 serves as a coordination point for Zn(2+).

Belongs to the histidinol dehydrogenase family. The cofactor is Zn(2+).

It carries out the reaction L-histidinol + 2 NAD(+) + H2O = L-histidine + 2 NADH + 3 H(+). The protein operates within amino-acid biosynthesis; L-histidine biosynthesis; L-histidine from 5-phospho-alpha-D-ribose 1-diphosphate: step 9/9. Catalyzes the sequential NAD-dependent oxidations of L-histidinol to L-histidinaldehyde and then to L-histidine. The polypeptide is Histidinol dehydrogenase (Staphylococcus epidermidis (strain ATCC 12228 / FDA PCI 1200)).